A 301-amino-acid chain; its full sequence is Amylovoran biosynthesis glycosyltransferase AmsB (301 aa).

The protein belongs to the glycosyltransferase 2 family.

It participates in glycan metabolism; exopolysaccharide biosynthesis. Its function is as follows. Involved in the biosynthesis of amylovoran, which functions as a virulence factor. May function as a glycosyl transferase which transfers galactose from UDP-galactose to a lipid-linked amylovoran-subunit precursor. This is Amylovoran biosynthesis glycosyltransferase AmsB (amsB) from Erwinia amylovora (Fire blight bacteria).